A 295-amino-acid chain; its full sequence is Fatty acid desaturase 4-like 1, chloroplastic (295 aa).

The N-terminal 29 residues, 1-29, are a transit peptide targeting the chloroplast; the sequence is MAVSFQTKNPLRPITNIPRSYGPTRVRVT. The next 3 helical transmembrane spans lie at 72 to 92, 102 to 122, and 175 to 195; these read WVAA…IGGF, LACY…HWAI, and LAIN…CILL.

The protein belongs to the fatty acid desaturase CarF family.

It is found in the plastid. Its subcellular location is the chloroplast membrane. It participates in lipid metabolism; fatty acid metabolism. Its function is as follows. Fatty acid desaturase involved in the production of chloroplast-specific phosphatidylglycerol molecular species. Catalyzes the formation of a trans double bond introduced close to the carboxyl group of palmitic acid, which is specifically esterified to the sn-2 glyceryl carbon of phosphatidylglycerol. This Arabidopsis thaliana (Mouse-ear cress) protein is Fatty acid desaturase 4-like 1, chloroplastic (FAD4L1).